Consider the following 225-residue polypeptide: MEELKKIAGVRAAQYVEDGMIVGLGTGSTAYYFVEEVGRRVQEEGLQVIGVTTSSRTTAQAQALGIPLKSIDEVDSVDVTVDGADEVDPNFNGIKGGGGALLMEKIVGTLTKDYIWVVDESKMVDTLGAFRLPVEVVQYGAERLFREFEKKGYKPSFREYDGVRFVTDMKNFIIDLDLGSIPDPIAFGNMLDHQVGVVEHGLFNGMVNRVIVAGKDGVRILEANK.

Substrate is bound by residues 26-29 (TGST), 82-85 (DGAD), and 95-98 (KGGG). Residue glutamate 104 is the Proton acceptor of the active site. Lysine 122 contacts substrate.

It belongs to the ribose 5-phosphate isomerase family. Homodimer.

The enzyme catalyses aldehydo-D-ribose 5-phosphate = D-ribulose 5-phosphate. It participates in carbohydrate degradation; pentose phosphate pathway; D-ribose 5-phosphate from D-ribulose 5-phosphate (non-oxidative stage): step 1/1. In terms of biological role, catalyzes the reversible conversion of ribose-5-phosphate to ribulose 5-phosphate. This is Ribose-5-phosphate isomerase A from Streptococcus mutans serotype c (strain ATCC 700610 / UA159).